The primary structure comprises 315 residues: Homoserine O-succinyltransferase (315 aa).

Cys142 serves as the catalytic Acyl-thioester intermediate. Residues Lys163 and Ser192 each coordinate substrate. His235 acts as the Proton acceptor in catalysis. Glu237 is a catalytic residue. A substrate-binding site is contributed by Arg249.

It belongs to the MetA family.

The protein localises to the cytoplasm. It carries out the reaction L-homoserine + succinyl-CoA = O-succinyl-L-homoserine + CoA. It functions in the pathway amino-acid biosynthesis; L-methionine biosynthesis via de novo pathway; O-succinyl-L-homoserine from L-homoserine: step 1/1. In terms of biological role, transfers a succinyl group from succinyl-CoA to L-homoserine, forming succinyl-L-homoserine. The protein is Homoserine O-succinyltransferase of Tolumonas auensis (strain DSM 9187 / NBRC 110442 / TA 4).